A 754-amino-acid chain; its full sequence is Neprilysin-1 (754 aa).

A helical; Signal-anchor for type II membrane protein transmembrane segment spans residues 5–27 (FGPPIVFLISCYALILCGTVDAL). N-linked (GlcNAc...) asparagine glycans are attached at residues asparagine 38, asparagine 81, asparagine 132, asparagine 217, asparagine 273, asparagine 303, and asparagine 441. One can recognise a Peptidase M13 domain in the interval 63 to 754 (VGDSEGYQEA…MNPTKRCVVW (692 aa)). Intrachain disulfides connect cysteine 87/cysteine 739, cysteine 95/cysteine 699, cysteine 151/cysteine 414, and cysteine 624/cysteine 751. Residue histidine 587 participates in Zn(2+) binding. Residue glutamate 588 is part of the active site. Histidine 591 is a binding site for Zn(2+). Residue asparagine 612 is glycosylated (N-linked (GlcNAc...) asparagine). Residue glutamate 649 coordinates Zn(2+). Aspartate 653 functions as the Proton donor in the catalytic mechanism.

It belongs to the peptidase M13 family. It depends on Zn(2+) as a cofactor. Specifically expressed in pharyngeal cells and a single head neuron.

The protein resides in the membrane. In terms of biological role, probable cell surface protease. Required to control the neuronal innervation of pharyngeal pumping. The polypeptide is Neprilysin-1 (nep-1) (Caenorhabditis elegans).